Consider the following 162-residue polypeptide: 2-C-methyl-D-erythritol 2,4-cyclodiphosphate synthase (162 aa).

Residues D12 and H14 each coordinate a divalent metal cation. 4-CDP-2-C-methyl-D-erythritol 2-phosphate is bound by residues 12–14 and 38–39; these read DVH and HS. Residue H46 coordinates a divalent metal cation. 4-CDP-2-C-methyl-D-erythritol 2-phosphate contacts are provided by residues 60-62, 65-69, F143, and R146; these read DIG and FPDTD.

It belongs to the IspF family. As to quaternary structure, homotrimer. A divalent metal cation is required as a cofactor.

The catalysed reaction is 4-CDP-2-C-methyl-D-erythritol 2-phosphate = 2-C-methyl-D-erythritol 2,4-cyclic diphosphate + CMP. Its pathway is isoprenoid biosynthesis; isopentenyl diphosphate biosynthesis via DXP pathway; isopentenyl diphosphate from 1-deoxy-D-xylulose 5-phosphate: step 4/6. In terms of biological role, involved in the biosynthesis of isopentenyl diphosphate (IPP) and dimethylallyl diphosphate (DMAPP), two major building blocks of isoprenoid compounds. Catalyzes the conversion of 4-diphosphocytidyl-2-C-methyl-D-erythritol 2-phosphate (CDP-ME2P) to 2-C-methyl-D-erythritol 2,4-cyclodiphosphate (ME-CPP) with a corresponding release of cytidine 5-monophosphate (CMP). The protein is 2-C-methyl-D-erythritol 2,4-cyclodiphosphate synthase of Azoarcus sp. (strain BH72).